A 161-amino-acid chain; its full sequence is uncharacterized protein (161 aa).

The segment covering 1–10 (MSKQQEQDTP) has biased composition (polar residues). 3 disordered regions span residues 1-20 (MSKQ…QRLQ), 55-84 (KKTR…MSDE), and 118-161 (LLQQ…ANNS). The stretch at 82 to 107 (SDEEYARQLQEEMDRLDASIQMDKEA) forms a coiled coil. Positions 144–161 (QQSSNTTTSSSCQSANNS) are enriched in low complexity.

This is an uncharacterized protein from Caenorhabditis elegans.